Consider the following 166-residue polypeptide: Anaerobic nitrite reductase NSHB1 (166 aa).

The 151-residue stretch at Ser13–Lys163 folds into the Globin domain. Residues Glu46–Ser50 carry the Homodimerization motif. Heme b contacts are provided by Ser56, Lys70, His74, Arg104, Thr108, and His109. The Homodimerization motif lies at Asp116–Asp128.

The protein belongs to the plant globin family. As to quaternary structure, homodimer. It depends on heme b as a cofactor. Expressed in coleoptiles, embryos, leaves, seminal roots and roots.

It is found in the cytoplasm. The protein resides in the nucleus. The catalysed reaction is Fe(III)-heme b-[protein] + nitric oxide + H2O = Fe(II)-heme b-[protein] + nitrite + 2 H(+). Slowly reduced by ascorbic acid (AA); this reaction may become a source of nitric oxide (NO) during hypoxia. Functionally, phytoglobin that reduces nitrite to nitric oxide under anoxic conditions (e.g. during flooding or in waterlogged soil). May not function as an oxygen storage or transport protein. Has an unusually high affinity for O(2) through a hexacoordinate heme iron because of a very low dissociation constant. This is Anaerobic nitrite reductase NSHB1 from Oryza sativa subsp. japonica (Rice).